Consider the following 270-residue polypeptide: L-fucose dehydrogenase (270 aa).

NAD(+) is bound by residues R19, I21, D40, K41, D62, V63, N89, Y154, K158, I187, T189, and L191. The Proton acceptor role is filled by Y154.

It belongs to the short-chain dehydrogenases/reductases (SDR) family. Homotetramer. Detected in retina.

The protein resides in the cytoplasm. It catalyses the reaction L-fucose + NAD(+) = L-fucono-1,5-lactone + NADH + H(+). The enzyme catalyses D-arabinose + NAD(+) = D-arabinono-1,5-lactone + NADH + H(+). It carries out the reaction L-galactose + NAD(+) = L-galactono-1,5-lactone + NADH + H(+). Its pathway is carbohydrate degradation; L-fucose degradation. Functionally, catalyzes the NAD(+)-dependent oxidation of L-fucose, yielding L-fucono-1,5-lactone, which rapidly converts spontaneously to L-fucone-1,4-lactone. Can also act on D-arabinose and L-galactose, with lower catalytic efficiency. Does not use NADPH. May be the initial enzyme of the putative L-fucose degradation pathway in mammals. The protein is L-fucose dehydrogenase (HSD17B14) of Bos taurus (Bovine).